A 331-amino-acid chain; its full sequence is Meiotic recombination protein P22 (331 aa).

Residues 132–187 (NNIQKEVHQRNSQRRSIQCTPKKRGRKPKQPAKKLQSRISTDQLGSTPSPSKLPAK) form a disordered region. The span at 152–167 (PKKRGRKPKQPAKKLQ) shows a compositional bias: basic residues. Polar residues predominate over residues 168-181 (SRISTDQLGSTPSP).

The protein belongs to the TOP6B-like family.

The protein resides in the chromosome. Its function is as follows. Required for formation of the mei-W68-mediated double-strand breaks (DSBs) that initiate meiotic recombination. This chain is Meiotic recombination protein P22, found in Drosophila melanogaster (Fruit fly).